The primary structure comprises 338 residues: Photosystem II assembly lipoprotein Ycf48 (338 aa).

A signal peptide spans 1–23 (MKRLFSNVINLTLVLIVGVALSG). Residue Cys24 is the site of N-palmitoyl cysteine attachment. Cys24 is lipidated: S-diacylglycerol cysteine.

The protein belongs to the Ycf48 family. In terms of assembly, part of early PSII assembly complexes which includes D1 (psbA) and PsbI; not found in mature PSII. Binds to the lumenal side of PSII complexes. Interacts with YidC.

It localises to the cellular thylakoid membrane. In terms of biological role, a factor required for optimal assembly of photosystem II (PSII), acting in the early stages of PSII assembly. Also plays a role in replacement of photodamaged D1 (psbA). Assists YidC in synthesis of chlorophyll-binding proteins. In Prochlorococcus marinus (strain NATL2A), this protein is Photosystem II assembly lipoprotein Ycf48.